The primary structure comprises 158 residues: Chromobox protein homolog 7 (158 aa).

In terms of domain architecture, Chromo spans 11–69 (FAVESIRKKRVRKGKVEYLVKWKGWPPKYSTWEPEEHILDPRLVMAYEEKEERDRASGY). The tract at residues 60 to 127 (KEERDRASGY…WTPTLPSSEV (68 aa)) is disordered. Positions 68–78 (GYRKRGPKPRR) are enriched in basic residues.

In terms of assembly, component of a PRC1-like complex. Distinct PRC1-like core complexes are composed of a RING1 subunit (RING1B or RING1A), one of the six PCGF proteins (PCGF1-6), one PHC protein (PHC1-3) and one of the CBX proteins (CBX2, CBX4, CBX6, CBX7 or CBX8). The composition of the PRC1 complex may differ between the PRC1 complex in pluripotent embryonic stem cells containing RNF2, CBX7 and PCGF2, and the PRC1 complex in differentiating cells containing RNF2, CBX2, CBX4 and BMI1. Interacts with RING1. Interacts with RNF2, PHC1 and PCGF2. Interacts (via chromodomain) with histone H3K9Me3 and H3K27me3. Interacts with H3K9Me2 and H4K20Me1. Interacts (via chromodomain) with single-stranded and double-stranded RNA; RNA binding seems to be required for the localization to chromatin. Interacts with PCGF1, PCGF3, PCGF5 and PCGF6. Expressed in embryonic stem cells.

The protein resides in the nucleus. Its subcellular location is the chromosome. Its function is as follows. Component of a Polycomb group (PcG) multiprotein PRC1-like complex, a complex class required to maintain the transcriptionally repressive state of many genes, including Hox genes, throughout development. PcG PRC1 complex acts via chromatin remodeling and modification of histones; it mediates monoubiquitination of histone H2A 'Lys-119', rendering chromatin heritably changed in its expressibility. Promotes histone H3 trimethylation at 'Lys-9' (H3K9me3). Binds to histone H3 trimethylated at 'Lys-9' (H3K9me3) or at 'Lys-27' (H3K27me3). Trimethylation at 'Lys-27' (H3K27me3) is important for chromatin recruitment. May possibly also bind trimethylated lysine residues in other proteins (in vitro). Binds non-coding, single-stranded RNA and double-stranded RNA. Plays a role in the timely repression of differentiation-specific genes in pluripotent embryonic stem cells to maintain the undifferentiated state. Regulator of cellular lifespan by maintaining the repression of CDKN2A, but not by inducing telomerase activity. In Mus musculus (Mouse), this protein is Chromobox protein homolog 7 (Cbx7).